A 1544-amino-acid polypeptide reads, in one-letter code: METSAPAPALEKKEAKSGLLEDSSFPDPGKKACPLAVAAAVAAHGVPQQLLPAFHAPLPIDMRHQEGRYHYDPHSVHSVHGPPTLSGSPVISDISLIRLSPHPAGPGESPFSAHHPYVNPHMEHYLRSVHSSPTLSMISAARGLSPADVAHEHLKERGLFSLAAPGTNPSDYYHQMTLMASHPTPYGDLLMQSGGAASAPHLHDYLNPVDASRFSSPRVTPRLSRKRALSISPLSDASLDLQRMIRTSPNSLVAYINNSRSSSAASGSYGHLSAGALSPAFTFPHPINPVAYQQILSQQRGLGSAFGHTPPLIQPSPTFLAQQPMTLTSISTMPTQLSSSSSNCLNDANQNKQNSESAVSSTVNPITIHKRSKVKTEAEGLRPASPLGLTQEQLADLKEDLDRDDCKQEAEVVIYETNCHWADCTKEYDTQEQLVHHINNEHIHGEKKEFVCRWQACTREQKPFKAQYMLVVHMRRHTGEKPHKCTFEGCSKAYSRLENLKTHLRSHTGEKPYVCEHEGCNKAFSNASDRAKHQNRTHSNEKPYICKIPGCTKRYTDPSSLRKHVKTVHGPDAHVTKKQRNDVHVRAPLLKENGDNEASAEPGGRGPEESVEASSTSHTVEDCLHIKAIKTESSGLCQSSPGAQSSCSSEPSPLGSAPNNDSGMEMPGTGPGSLGDLTALADTCPGADTSALAAPSTGGLQLRKHMSTVHRFEQLKREKLKSLKDSCSWAGPAPHTRNTKLPPLPVNGSVLENFNNTGGGGPAGLLPSQRLPELTEVTMLSQLQERRDSSTSTMSSAYTVSRRSSGISPYFSSRRSSEASPLGGLRPHNASSADSYDPISTDASRRSSEASQCSGGGPGLLNLTPAQQYNLRAKYAAATGGPPPTPLPGLDRVSLRTRLALLDAPERALPGACPHPLGPRRGSDGPTYSHGHGHGYAGAAPAFPHEGPNSSTRRASDPVRRPDPLILPRVQRFHSTHNMNPGSLPPCADRRGLHVQSHPSVDSNLTRNAYSPRPPSINENVVMEAVAAGVDGPGLECDLGLVEDELVLPDDVVQYIKAHTGGTLDDGIRQGYPTEGTGFPENSKLPSPGLQGHRRLAAADSNMGPSAPGLGGCQLSYSPSSNLNKSNMPVQWNEVSSGTVDALPTQVKPPPFPHSNLAVVQQKPAFGQYPGYNPQSVQSSSGGLDSTQPHLQLRGAPSASRGSYTQQPRQPAAGSQCLGMSAAMSPQASYSQAHPQLSPNIVSGSLNQFSPSCSNMAAKPSHLGLPQQMEVVPNATIMNGHQREHGVPNSSLAAVSQPHPVLSYPQQDSYQQGSNLLSSHQPGFMESQQNAGFGLMQPRPPLEPNTASRHRGVRSGQQQLYARTTGQAMVTSANQETAEAMPKGPAGTMVSLAPQPSQDTGRAQDQNTLYYYGQIHMYEQNGGCPAVQPQPPQPQACSDSIQPEPLPSPGVNQVSSTVDSQLLEPPQIDFDAIMDDGDHSSLFSGALSPTLLHNLSQNSSRLTTPRNSLTLPSIPAGISNMAVGDMSSMLTSLAEESKFLNMMT.

The disordered stretch occupies residues 1–26; the sequence is METSAPAPALEKKEAKSGLLEDSSFP. 4 positions are modified to phosphoserine: S145, S230, S232, and S238. Positions 338 to 364 are disordered; it reads SSSSSNCLNDANQNKQNSESAVSSTVN. S385 carries the post-translational modification Phosphoserine; by DYRK2. Residues 417 to 444 form a C2H2-type 1 zinc finger; the sequence is TNCHWADCTKEYDTQEQLVHHINNEHIH. Residues 455 to 477 form a C2H2-type 2; degenerate zinc finger; sequence QACTREQKPFKAQYMLVVHMRRH. C2H2-type zinc fingers lie at residues 483–507, 513–538, and 544–569; these read HKCT…LRSH, YVCE…NRTH, and YICK…KTVH. Disordered regions lie at residues 557–619 and 635–682; these read DPSS…TSHT and GLCQ…ALAD. Basic and acidic residues predominate over residues 569–585; it reads HGPDAHVTKKQRNDVHV. A compositionally biased stretch (low complexity) spans 637–657; sequence CQSSPGAQSSCSSEPSPLGSA. A Phosphoserine modification is found at S707. Phosphothreonine is present on T708. N6-acetyllysine; by EP300 is present on K740. Disordered stretches follow at residues 781-800, 805-861, 908-963, 995-1016, 1166-1220, and 1422-1457; these read SQLQ…AYTV, SGIS…PGLL, ALPG…RRPD, VQSH…RPPS, FGQY…CLGM, and GGCP…VSST. Composition is skewed to polar residues over residues 790-800 and 805-814; these read STSTMSSAYTV and SGISPYFSSR. A compositionally biased stretch (basic and acidic residues) spans 954–963; it reads RASDPVRRPD. Phosphoserine; by DYRK2 is present on S997. Composition is skewed to polar residues over residues 997-1009, 1173-1190, and 1200-1209; these read SHPS…TRNA, NPQS…TQPH, and SRGSYTQQPR.

This sequence belongs to the GLI C2H2-type zinc-finger protein family. In terms of assembly, interacts with ZIC1 and ZIC2. Interacts with STK36. Interacts with SUFU; this inhibits transcriptional activation mediated by GLI2. Interacts (via C-terminal internal region) with FOXC1 (via N-terminus); this interaction is direct and increases GLI2 DNA-binding and transcriptional activity through a smoothened (SMO)-independent Hedgehog (Hh) signaling pathway. In terms of processing, phosphorylated in vitro by ULK3. Phosphorylated by DYRK2; this inhibits GLI2 transcription factor activity and promotes proteasomal degradation of GLI2. Post-translationally, acetylation at Lys-740 inhibits Hh target gene expression, probably by impeding entry into chromatin thus preventing promoter occupancy.

It localises to the nucleus. Its subcellular location is the cytoplasm. The protein resides in the cell projection. The protein localises to the cilium. In terms of biological role, functions as a transcription regulator in the hedgehog (Hh) pathway. Functions as a transcriptional activator. May also function as transcriptional repressor. Requires STK36 for full transcriptional activator activity. Binds to the DNA sequence 5'-GAACCACCCA-3' which is part of the TRE-2S regulatory element. Is involved in the smoothened (SHH) signaling pathway. Required for normal skeleton development. This chain is Zinc finger protein GLI2, found in Mus musculus (Mouse).